Consider the following 221-residue polypeptide: Large ribosomal subunit protein bL25 (221 aa).

The tract at residues 192–221 is disordered; that stretch reads APRVEKEETEEDTVAPGDVPAENSKDADEE.

This sequence belongs to the bacterial ribosomal protein bL25 family. CTC subfamily. Part of the 50S ribosomal subunit; part of the 5S rRNA/L5/L18/L25 subcomplex. Contacts the 5S rRNA. Binds to the 5S rRNA independently of L5 and L18.

In terms of biological role, this is one of the proteins that binds to the 5S RNA in the ribosome where it forms part of the central protuberance. This Idiomarina loihiensis (strain ATCC BAA-735 / DSM 15497 / L2-TR) protein is Large ribosomal subunit protein bL25.